The chain runs to 998 residues: SEC23-interacting protein (998 aa).

The tract at residues 1-363 (MADRKANGGG…YTEEFSEKLE (363 aa)) is interaction with SEC23A. Positions 50–246 (LPGEDSTDVG…AQQQVPARPA (197 aa)) are disordered. Residues 54-63 (DSTDVGEEDS) are compositionally biased toward acidic residues. Over residues 65 to 78 (LGQTSTHTSTPQTF) the composition is skewed to polar residues. Residues 79–88 (SYFSQVSSSS) show a composition bias toward low complexity. 3 stretches are compositionally biased toward polar residues: residues 94–108 (IGQS…SAGQ), 143–158 (PPSQ…SQPS), and 232–241 (AMQSPAQQQV). A Phosphoserine modification is found at S600. The region spanning 640–703 (EEPLTLHGTL…NFVKLKAAKL (64 aa)) is the SAM domain. Residues 720 to 742 (TKGQDESAPKTKEMASPSSESNE) form a disordered region. Positions 722-732 (GQDESAPKTKE) are enriched in basic and acidic residues. S735, S748, and S924 each carry phosphoserine. One can recognise a DDHD domain in the interval 777–987 (LDFEPEIFFA…ALLLLKEIYR (211 aa)).

This sequence belongs to the PA-PLA1 family. In terms of assembly, interacts with SEC23A.

The protein localises to the cytoplasmic vesicle. It localises to the COPII-coated vesicle membrane. The protein resides in the endoplasmic reticulum. Functionally, plays a role in the organization of endoplasmic reticulum exit sites. Specifically binds to phosphatidylinositol 3-phosphate (PI(3)P), phosphatidylinositol 4-phosphate (PI(4)P) and phosphatidylinositol 5-phosphate (PI(5)P). The sequence is that of SEC23-interacting protein (Sec23ip) from Mus musculus (Mouse).